Here is a 529-residue protein sequence, read N- to C-terminus: Bifunctional purine biosynthesis protein PurH (529 aa).

One can recognise an MGS-like domain in the interval 2 to 148 (QHLRPIRRAL…KNHKDVTIVV (147 aa)).

It belongs to the PurH family.

It catalyses the reaction (6R)-10-formyltetrahydrofolate + 5-amino-1-(5-phospho-beta-D-ribosyl)imidazole-4-carboxamide = 5-formamido-1-(5-phospho-D-ribosyl)imidazole-4-carboxamide + (6S)-5,6,7,8-tetrahydrofolate. The enzyme catalyses IMP + H2O = 5-formamido-1-(5-phospho-D-ribosyl)imidazole-4-carboxamide. Its pathway is purine metabolism; IMP biosynthesis via de novo pathway; 5-formamido-1-(5-phospho-D-ribosyl)imidazole-4-carboxamide from 5-amino-1-(5-phospho-D-ribosyl)imidazole-4-carboxamide (10-formyl THF route): step 1/1. It participates in purine metabolism; IMP biosynthesis via de novo pathway; IMP from 5-formamido-1-(5-phospho-D-ribosyl)imidazole-4-carboxamide: step 1/1. The chain is Bifunctional purine biosynthesis protein PurH from Proteus mirabilis (strain HI4320).